We begin with the raw amino-acid sequence, 306 residues long: Lipoyl synthase (306 aa).

[4Fe-4S] cluster contacts are provided by Cys52, Cys57, Cys63, Cys78, Cys82, Cys85, and Ser289. Residues 64-278 form the Radical SAM core domain; that stretch reads WNRKTATYML…KETAYKIGFK (215 aa).

The protein belongs to the radical SAM superfamily. Lipoyl synthase family. The cofactor is [4Fe-4S] cluster.

The protein localises to the cytoplasm. The enzyme catalyses [[Fe-S] cluster scaffold protein carrying a second [4Fe-4S](2+) cluster] + N(6)-octanoyl-L-lysyl-[protein] + 2 oxidized [2Fe-2S]-[ferredoxin] + 2 S-adenosyl-L-methionine + 4 H(+) = [[Fe-S] cluster scaffold protein] + N(6)-[(R)-dihydrolipoyl]-L-lysyl-[protein] + 4 Fe(3+) + 2 hydrogen sulfide + 2 5'-deoxyadenosine + 2 L-methionine + 2 reduced [2Fe-2S]-[ferredoxin]. It participates in protein modification; protein lipoylation via endogenous pathway; protein N(6)-(lipoyl)lysine from octanoyl-[acyl-carrier-protein]: step 2/2. Functionally, catalyzes the radical-mediated insertion of two sulfur atoms into the C-6 and C-8 positions of the octanoyl moiety bound to the lipoyl domains of lipoate-dependent enzymes, thereby converting the octanoylated domains into lipoylated derivatives. The sequence is that of Lipoyl synthase from Leptospira biflexa serovar Patoc (strain Patoc 1 / Ames).